The primary structure comprises 434 residues: MKVFSHQDEVEFISDDSRECTPKSAFLLTQSSRVYEAAAREKGCKLFLEPKDLHRFLKTDIPLIGVTGTNGKTTTSAAIYSILLDLGYKVALLGTRGFFMNDELIEPKGLTTPPLLELYERIDRAKRAGCDFFVMEVSSHAIDQKRIEGLNFALKILTNITSDHLDYHKSLEHYIQTKNSFFDDSTPKLINKDESKAKFNLQNALSYGIEHPSSYHVKAYSLHGGIEARIAFLEKEASLSSSLFGKHNLYNLLAAVSAVHRLIGGELQEICDMAERFGGVEGRMERVSEEPLVVVDFAHTEDGMRQIFESFPHQEIVVLFGAGGDRDRSKRPKMGAVADRYAKRIYLTSDNPRSEDPLLIIEEIEKGIHHCQKCVKEPDRVQAIRRAVKELEAQEVLLILGKGDEAEQIIGSQKIPMKDRETVLSALGEIRGVR.

Position 17 (S17) interacts with UDP-N-acetyl-alpha-D-muramoyl-L-alanyl-D-glutamate. 68 to 74 (GTNGKTT) is an ATP binding site. Residues 111–112 (TT), S138, Q144, and R146 contribute to the UDP-N-acetyl-alpha-D-muramoyl-L-alanyl-D-glutamate site. An N6-carboxylysine modification is found at K178. Meso-2,6-diaminopimelate-binding positions include R326, 350–353 (DNPR), G401, and E405. A Meso-diaminopimelate recognition motif motif is present at residues 350–353 (DNPR).

It belongs to the MurCDEF family. MurE subfamily. The cofactor is Mg(2+). Post-translationally, carboxylation is probably crucial for Mg(2+) binding and, consequently, for the gamma-phosphate positioning of ATP.

Its subcellular location is the cytoplasm. The catalysed reaction is UDP-N-acetyl-alpha-D-muramoyl-L-alanyl-D-glutamate + meso-2,6-diaminopimelate + ATP = UDP-N-acetyl-alpha-D-muramoyl-L-alanyl-gamma-D-glutamyl-meso-2,6-diaminopimelate + ADP + phosphate + H(+). It functions in the pathway cell wall biogenesis; peptidoglycan biosynthesis. Functionally, catalyzes the addition of meso-diaminopimelic acid to the nucleotide precursor UDP-N-acetylmuramoyl-L-alanyl-D-glutamate (UMAG) in the biosynthesis of bacterial cell-wall peptidoglycan. The protein is UDP-N-acetylmuramoyl-L-alanyl-D-glutamate--2,6-diaminopimelate ligase of Wolinella succinogenes (strain ATCC 29543 / DSM 1740 / CCUG 13145 / JCM 31913 / LMG 7466 / NCTC 11488 / FDC 602W) (Vibrio succinogenes).